A 156-amino-acid polypeptide reads, in one-letter code: NAD(P)H-quinone oxidoreductase subunit N (156 aa).

This sequence belongs to the complex I NdhN subunit family. NDH-1 can be composed of about 15 different subunits; different subcomplexes with different compositions have been identified which probably have different functions.

It is found in the cellular thylakoid membrane. The catalysed reaction is a plastoquinone + NADH + (n+1) H(+)(in) = a plastoquinol + NAD(+) + n H(+)(out). It carries out the reaction a plastoquinone + NADPH + (n+1) H(+)(in) = a plastoquinol + NADP(+) + n H(+)(out). Its function is as follows. NDH-1 shuttles electrons from an unknown electron donor, via FMN and iron-sulfur (Fe-S) centers, to quinones in the respiratory and/or the photosynthetic chain. The immediate electron acceptor for the enzyme in this species is believed to be plastoquinone. Couples the redox reaction to proton translocation, and thus conserves the redox energy in a proton gradient. Cyanobacterial NDH-1 also plays a role in inorganic carbon-concentration. The protein is NAD(P)H-quinone oxidoreductase subunit N of Prochlorococcus marinus (strain MIT 9515).